A 473-amino-acid polypeptide reads, in one-letter code: Laccase-3 (473 aa).

An N-terminal signal peptide occupies residues 1-21; sequence MSFSSLRRALVFLGACSSALA. 2 Plastocyanin-like domains span residues 23 to 148 and 160 to 298; these read IGPV…LVIY and VDDE…ILRY. A glycan (N-linked (GlcNAc...) asparagine) is linked at N75. Cu cation is bound by residues H85, H87, H130, and H132. Disulfide bonds link C106-C462 and C138-C221. N226, N283, N309, N346, N350, and N374 each carry an N-linked (GlcNAc...) asparagine glycan. The Plastocyanin-like 3 domain occupies 365–444; the sequence is TVPVLLQILN…AGLAIVFAED (80 aa). 7 residues coordinate Cu cation: H410, H413, H415, H426, C427, H428, and H432. A glycan (N-linked (GlcNAc...) asparagine) is linked at N470.

Belongs to the multicopper oxidase family. As to quaternary structure, homodimer. It depends on Cu cation as a cofactor.

The protein resides in the secreted. The catalysed reaction is 4 hydroquinone + O2 = 4 benzosemiquinone + 2 H2O. Functionally, lignin degradation and detoxification of lignin-derived products. The sequence is that of Laccase-3 (LCC3) from Trametes villosa (White-rot fungus).